The chain runs to 216 residues: Adenylate kinase (216 aa).

10-15 (GAGKGT) is an ATP binding site. The tract at residues 30 to 59 (STGDIFRANIKEKTPLGIEAKRYIDNGQLV) is NMP. AMP-binding positions include Thr31, Arg36, 57-59 (QLV), 85-88 (GFPR), and Gln92. The interval 126 to 163 (GRRVCTSCGASYHIRFNPPKIEGKCDICDNELIQRKDD) is LID. ATP is bound at residue Arg127. Zn(2+)-binding residues include Cys130 and Cys133. ATP is bound at residue 136–137 (SY). Zn(2+) contacts are provided by Cys150 and Cys153. The AMP site is built by Arg160 and Arg171. Glu199 contributes to the ATP binding site.

It belongs to the adenylate kinase family. As to quaternary structure, monomer.

It localises to the cytoplasm. It catalyses the reaction AMP + ATP = 2 ADP. Its pathway is purine metabolism; AMP biosynthesis via salvage pathway; AMP from ADP: step 1/1. Its function is as follows. Catalyzes the reversible transfer of the terminal phosphate group between ATP and AMP. Plays an important role in cellular energy homeostasis and in adenine nucleotide metabolism. The polypeptide is Adenylate kinase (Clostridium botulinum (strain 657 / Type Ba4)).